Reading from the N-terminus, the 56-residue chain is Large ribosomal subunit protein bL32c (56 aa).

This sequence belongs to the bacterial ribosomal protein bL32 family.

The protein localises to the plastid. It is found in the chloroplast. The polypeptide is Large ribosomal subunit protein bL32c (Platanus occidentalis (Sycamore)).